Consider the following 332-residue polypeptide: Lipoyl synthase (332 aa).

The [4Fe-4S] cluster site is built by C55, C60, C66, C81, C85, C88, and S292. Positions 67-281 (WEDREATFLI…SDEAERIGFL (215 aa)) constitute a Radical SAM core domain.

Belongs to the radical SAM superfamily. Lipoyl synthase family. [4Fe-4S] cluster serves as cofactor.

It is found in the cytoplasm. It carries out the reaction [[Fe-S] cluster scaffold protein carrying a second [4Fe-4S](2+) cluster] + N(6)-octanoyl-L-lysyl-[protein] + 2 oxidized [2Fe-2S]-[ferredoxin] + 2 S-adenosyl-L-methionine + 4 H(+) = [[Fe-S] cluster scaffold protein] + N(6)-[(R)-dihydrolipoyl]-L-lysyl-[protein] + 4 Fe(3+) + 2 hydrogen sulfide + 2 5'-deoxyadenosine + 2 L-methionine + 2 reduced [2Fe-2S]-[ferredoxin]. The protein operates within protein modification; protein lipoylation via endogenous pathway; protein N(6)-(lipoyl)lysine from octanoyl-[acyl-carrier-protein]: step 2/2. In terms of biological role, catalyzes the radical-mediated insertion of two sulfur atoms into the C-6 and C-8 positions of the octanoyl moiety bound to the lipoyl domains of lipoate-dependent enzymes, thereby converting the octanoylated domains into lipoylated derivatives. In Beutenbergia cavernae (strain ATCC BAA-8 / DSM 12333 / CCUG 43141 / JCM 11478 / NBRC 16432 / NCIMB 13614 / HKI 0122), this protein is Lipoyl synthase.